Here is a 1500-residue protein sequence, read N- to C-terminus: Carbamoyl-phosphate synthase [ammonia], mitochondrial (1500 aa).

The N-terminal 38 residues, 1-38 (MTRILTACKVVKTLKSGFGLANVTSKRQWDFSRPGIRL), are a transit peptide targeting the mitochondrion. The anthranilate phosphoribosyltransferase homolog stretch occupies residues 39–218 (LSVKAQTAHI…VKVFGKGNPT (180 aa)). 3 positions are modified to N6-acetyllysine; alternate: Lys-55, Lys-57, and Lys-119. Residue Lys-55 is modified to N6-glutaryllysine; alternate. N6-succinyllysine; alternate occurs at positions 55, 57, and 119. Phosphoserine is present on Ser-148. Lys-157 and Lys-171 each carry N6-acetyllysine; alternate. Lys-157 is modified (N6-succinyllysine; alternate). N6-glutaryllysine; alternate is present on Lys-171. An N6-glutaryllysine modification is found at Lys-176. Position 182 is an N6-acetyllysine (Lys-182). Ser-189 bears the Phosphoserine mark. Lys-197 is modified (N6-acetyllysine). N6-acetyllysine; alternate is present on residues Lys-207, Lys-210, Lys-214, Lys-219, and Lys-228. 5 positions are modified to N6-glutaryllysine; alternate: Lys-207, Lys-210, Lys-214, Lys-219, and Lys-228. At Lys-207 the chain carries N6-succinyllysine; alternate. At Lys-214 the chain carries N6-succinyllysine; alternate. The Glutamine amidotransferase type-1 domain occupies 219–404 (KVVAVDCGIK…FSLIKKGKGT (186 aa)). Lys-237 carries the post-translational modification N6-glutaryllysine. Lys-279 is subject to N6-acetyllysine. An N6-acetyllysine; alternate mark is found at Lys-280, Lys-287, Lys-307, and Lys-310. Position 280 is an N6-glutaryllysine; alternate (Lys-280). Residues Lys-287 and Lys-307 each carry the N6-succinyllysine; alternate modification. Residues Lys-307 and Lys-310 each carry the N6-glutaryllysine; alternate modification. Lys-400 carries the N6-succinyllysine modification. 4 positions are modified to N6-glutaryllysine; alternate: Lys-402, Lys-412, Lys-453, and Lys-458. An N6-succinyllysine; alternate mark is found at Lys-402 and Lys-412. An N6-acetyllysine; alternate mark is found at Lys-412, Lys-453, Lys-458, Lys-522, Lys-527, and Lys-532. Residues Lys-458, Lys-522, and Lys-527 each carry the N6-succinyllysine; alternate modification. Residues Lys-527 and Lys-532 each carry the N6-glutaryllysine; alternate modification. A Phosphoserine; alternate modification is found at Ser-537. Ser-537 carries O-linked (GlcNAc) serine; alternate glycosylation. Ser-540 carries the post-translational modification Phosphoserine. In terms of domain architecture, ATP-grasp 1 spans 551 to 743 (SDKLNEINEK…LAFIAAKIAL (193 aa)). Lys-553 and Lys-560 each carry N6-acetyllysine; alternate. Lys-553 is modified (N6-glutaryllysine; alternate). N6-succinyllysine; alternate occurs at positions 553 and 560. Position 569 is a phosphoserine (Ser-569). N6-acetyllysine; alternate occurs at positions 575, 603, and 612. N6-succinyllysine; alternate is present on residues Lys-575, Lys-603, and Lys-612. The residue at position 630 (Lys-630) is an N6-acetyllysine. Residue Lys-728 is modified to N6-glutaryllysine. An N6-acetyllysine; alternate mark is found at Lys-751, Lys-757, Lys-772, Lys-793, Lys-811, Lys-831, Lys-841, and Lys-856. 2 positions are modified to N6-succinyllysine; alternate: Lys-751 and Lys-757. N6-glutaryllysine; alternate occurs at positions 757, 772, 793, and 811. The residue at position 793 (Lys-793) is an N6-succinyllysine; alternate. Lys-831 is modified (N6-succinyllysine; alternate). Residues Lys-841 and Lys-856 each carry the N6-glutaryllysine; alternate modification. Lys-869 is modified (N6-glutaryllysine). N6-acetyllysine; alternate occurs at positions 875, 889, and 892. 3 positions are modified to N6-glutaryllysine; alternate: Lys-875, Lys-889, and Lys-892. An N6-succinyllysine; alternate mark is found at Lys-875, Lys-889, and Lys-892. Phosphoserine occurs at positions 896 and 898. N6-acetyllysine; alternate is present on residues Lys-908, Lys-915, and Lys-919. An N6-glutaryllysine; alternate mark is found at Lys-908, Lys-915, and Lys-919. N6-succinyllysine; alternate occurs at positions 915 and 919. Lys-935 is modified (N6-acetyllysine). Position 1036 is a phosphoserine (Ser-1036). Lys-1074 is modified (N6-acetyllysine; alternate). N6-glutaryllysine; alternate is present on Lys-1074. Lys-1074 is subject to N6-succinyllysine; alternate. Phosphoserine occurs at positions 1079, 1090, and 1093. In terms of domain architecture, ATP-grasp 2 spans 1093–1284 (SAVLDELKVA…FIDVATKVMI (192 aa)). N6-acetyllysine; alternate is present on Lys-1100. Position 1100 is an N6-succinyllysine; alternate (Lys-1100). N6-succinyllysine is present on Lys-1149. An N6-acetyllysine; alternate mark is found at Lys-1168 and Lys-1183. An N6-glutaryllysine; alternate mark is found at Lys-1168 and Lys-1183. 2 positions are modified to N6-succinyllysine; alternate: Lys-1168 and Lys-1183. Ser-1203 is modified (phosphoserine). An N6-acetyllysine modification is found at Lys-1222. Residue Lys-1224 is modified to N6-glutaryllysine. Lys-1232, Lys-1269, and Lys-1291 each carry N6-acetyllysine; alternate. Lys-1232, Lys-1269, and Lys-1291 each carry N6-succinyllysine; alternate. Ser-1331 carries O-linked (GlcNAc) serine glycosylation. A glycan (O-linked (GlcNAc) threonine) is linked at Thr-1332. The MGS-like domain maps to 1355 to 1500 (FKIPQKGILI…YRQYSAGKAA (146 aa)). Lys-1356 is modified (N6-acetyllysine; alternate). N6-glutaryllysine; alternate occurs at positions 1356 and 1360. An N6-succinyllysine; alternate mark is found at Lys-1356 and Lys-1360. Residues Thr-1391, Thr-1394, and Trp-1410 each coordinate N-acetyl-L-glutamate. Residues Ser-1419 and Ser-1431 each carry the phosphoserine modification. Residues Asn-1437 and Asn-1440 each contribute to the N-acetyl-L-glutamate site. Lys-1444 carries the post-translational modification N6-acetyllysine; alternate. At Lys-1444 the chain carries N6-succinyllysine; alternate. Residue Asn-1449 coordinates N-acetyl-L-glutamate. 3 positions are modified to N6-acetyllysine; alternate: Lys-1471, Lys-1479, and Lys-1486. N6-succinyllysine; alternate occurs at positions 1471, 1479, and 1486. Lys-1479 and Lys-1486 each carry N6-glutaryllysine; alternate.

As to quaternary structure, can form homooligomers (monomers as predominant form and dimers). In terms of processing, 50% of the mature protein that was isolated had Leu-39 as its N-terminal residue and 50% had Ser-40 suggesting two adjacent processing sites. However, the possibility of proteolytic removal of Leu-39 during the isolation of the enzyme cannot be excluded. Undergoes proteolytic cleavage in the C-terminal region corresponding to the loss of approximately 12 AA residues from the C-terminus. Post-translationally, succinylated at Lys-287 and Lys-1291. Desuccinylated at Lys-1291 by SIRT5, leading to activation. Glutarylated. Glutarylation levels increase during fasting. Deglutarylated by SIRT5 at Lys-55, Lys-219, Lys-412, Lys-889, Lys-892, Lys-915, Lys-1360 and Lys-1486, leading to activation. As to expression, primarily in the liver and small intestine.

It is found in the mitochondrion. It localises to the nucleus. The protein localises to the nucleolus. The protein resides in the cell membrane. The enzyme catalyses hydrogencarbonate + NH4(+) + 2 ATP = carbamoyl phosphate + 2 ADP + phosphate + 2 H(+). Its activity is regulated as follows. Requires N-acetyl-L-glutamate (NAG) as an allosteric activator. N-acetyl-L-beta-phenylglutamate (Phe-NAG) can also activate CPSase I, but with an activation constant that is 2-fold higher than that for NAG. Its function is as follows. Involved in the urea cycle of ureotelic animals where the enzyme plays an important role in removing excess ammonia from the cell. The protein is Carbamoyl-phosphate synthase [ammonia], mitochondrial (Cps1) of Rattus norvegicus (Rat).